Consider the following 363-residue polypeptide: Protein-arginine kinase (363 aa).

A Phosphagen kinase C-terminal domain is found at 24 to 254; sequence IVLSSRIRLA…AQLIEQERSA (231 aa). Residues 27 to 31, His92, Arg125, 176 to 180, and 207 to 212 contribute to the ATP site; these read SSRIR, RASVM, and RGIYGE. The short motif at 337 to 342 is the RDXXRA motif of the pArg binding pocket involved in allosteric regulation element; the sequence is RDIRRA.

The protein belongs to the ATP:guanido phosphotransferase family.

It catalyses the reaction L-arginyl-[protein] + ATP = N(omega)-phospho-L-arginyl-[protein] + ADP + H(+). With respect to regulation, appears to be allosterically activated by the binding of pArg-containing polypeptides to the pArg-binding pocket localized in the C-terminal domain of McsB. In terms of biological role, catalyzes the specific phosphorylation of arginine residues in a large number of proteins. Is part of the bacterial stress response system. Protein arginine phosphorylation has a physiologically important role and is involved in the regulation of many critical cellular processes, such as protein homeostasis, motility, competence, and stringent and stress responses, by regulating gene expression and protein activity. The chain is Protein-arginine kinase from Bacillus licheniformis (strain ATCC 14580 / DSM 13 / JCM 2505 / CCUG 7422 / NBRC 12200 / NCIMB 9375 / NCTC 10341 / NRRL NRS-1264 / Gibson 46).